Here is a 175-residue protein sequence, read N- to C-terminus: Alpha-crystallin B chain (175 aa).

Residue Met1 is modified to N-acetylmethionine. A phosphoserine mark is found at Ser19, Ser45, and Ser59. One can recognise a sHSP domain in the interval 56–164; it reads RAPSWIDTGL…PERTIPITRE (109 aa). His83 contacts Zn(2+). Residue Lys92 is modified to N6-acetyllysine. Zn(2+)-binding residues include His104, Glu106, His111, and His119. Residues 145 to 175 form a disordered region; that stretch reads VNGPRKQASGPERTIPITREEKPAVTAAPKK. Lys166 carries the N6-acetyllysine modification. Residue Thr170 is glycosylated (O-linked (GlcNAc) threonine).

The protein belongs to the small heat shock protein (HSP20) family. As to quaternary structure, heteromer composed of three CRYAA and one CRYAB subunits. Aggregates with homologous proteins, including the small heat shock protein HSPB1, to form large heteromeric complexes. Inter-subunit bridging via zinc ions enhances stability, which is crucial as there is no protein turn over in the lens. Interacts with HSPBAP1 and TTN/titin. Interacts with TMEM109; in the cellular response to DNA damage. Interacts with DES; binds rapidly during early stages of DES filament assembly and a reduced binding seen in the later stages. Interacts with TMED10; the interaction mediates the translocation from the cytoplasm into the ERGIC (endoplasmic reticulum-Golgi intermediate compartment) and thereby secretion. Interacts with ATP6V1A and with MTOR, forming a ternary complex. Lens as well as other tissues.

It localises to the cytoplasm. It is found in the nucleus. Its subcellular location is the secreted. The protein resides in the lysosome. Its function is as follows. May contribute to the transparency and refractive index of the lens. Has chaperone-like activity, preventing aggregation of various proteins under a wide range of stress conditions. In lens epithelial cells, stabilizes the ATP6V1A protein, preventing its degradation by the proteasome. The polypeptide is Alpha-crystallin B chain (CRYAB) (Mesocricetus auratus (Golden hamster)).